The sequence spans 147 residues: Large ribosomal subunit protein bL9 (147 aa).

This sequence belongs to the bacterial ribosomal protein bL9 family.

In terms of biological role, binds to the 23S rRNA. The polypeptide is Large ribosomal subunit protein bL9 (Marinomonas sp. (strain MWYL1)).